A 346-amino-acid chain; its full sequence is N-acetyl-gamma-glutamyl-phosphate reductase (346 aa).

Cys149 is an active-site residue.

Belongs to the NAGSA dehydrogenase family. Type 1 subfamily.

The protein localises to the cytoplasm. It carries out the reaction N-acetyl-L-glutamate 5-semialdehyde + phosphate + NADP(+) = N-acetyl-L-glutamyl 5-phosphate + NADPH + H(+). Its pathway is amino-acid biosynthesis; L-arginine biosynthesis; N(2)-acetyl-L-ornithine from L-glutamate: step 3/4. Its function is as follows. Catalyzes the NADPH-dependent reduction of N-acetyl-5-glutamyl phosphate to yield N-acetyl-L-glutamate 5-semialdehyde. This chain is N-acetyl-gamma-glutamyl-phosphate reductase, found in Geobacter sulfurreducens (strain ATCC 51573 / DSM 12127 / PCA).